A 125-amino-acid chain; its full sequence is Apolipoprotein C-IV (125 aa).

Residues 1-27 form the signal peptide; it reads MSLLRQRLQALPVLCLCVLVLACIGAC.

It belongs to the apolipoprotein C4 family.

The protein localises to the secreted. Its function is as follows. May participate in lipoprotein metabolism. This is Apolipoprotein C-IV (APOC4) from Plecturocebus moloch (Dusky titi monkey).